Consider the following 473-residue polypeptide: Inactive FRIGIDA-like protein 2 (473 aa).

Coiled coils occupy residues 3 to 35 (AAESIAASINQIDEKKQKLKKAFDDLQAHRSLL) and 306 to 361 (SLKV…RATK). A disordered region spans residues 356–384 (RKRATKFNSPANPQQPQEQKVDNKRPRVA). Residues 361–373 (KFNSPANPQQPQE) are compositionally biased toward polar residues.

Belongs to the Frigida family. As to expression, expressed at low levels throughout the plant, with slightly higher expression in developing seeds and the highest expression in pollen.

Its function is as follows. Inactive FRIGIDA-like 2 protein. The polypeptide is Inactive FRIGIDA-like protein 2 (FRL2) (Arabidopsis thaliana (Mouse-ear cress)).